The chain runs to 277 residues: Large ribosomal subunit protein uL2 (277 aa).

Disordered regions lie at residues Leu-37–His-58 and Gly-222–Arg-277. Positions Val-268 to Arg-277 are enriched in basic residues.

It belongs to the universal ribosomal protein uL2 family. In terms of assembly, part of the 50S ribosomal subunit. Forms a bridge to the 30S subunit in the 70S ribosome.

One of the primary rRNA binding proteins. Required for association of the 30S and 50S subunits to form the 70S ribosome, for tRNA binding and peptide bond formation. It has been suggested to have peptidyltransferase activity; this is somewhat controversial. Makes several contacts with the 16S rRNA in the 70S ribosome. The protein is Large ribosomal subunit protein uL2 of Parafrankia sp. (strain EAN1pec).